A 178-amino-acid polypeptide reads, in one-letter code: MSRIGKKPVVIPSGVTINVAAGNKVEVKGAKATLSKAFSTDVTFSVADNVATITPNNNSKNAVAQSGTARAILSNMVEGVSKGFERKLKIIGVGYRAKAQGNELNLTLGFSHPVVYKLPQGITAETPAPTEIILKGADKELLGKVASEIREYRKPEPYKGKGVRYEDEYVAKKEAKKK.

This sequence belongs to the universal ribosomal protein uL6 family. As to quaternary structure, part of the 50S ribosomal subunit.

In terms of biological role, this protein binds to the 23S rRNA, and is important in its secondary structure. It is located near the subunit interface in the base of the L7/L12 stalk, and near the tRNA binding site of the peptidyltransferase center. The protein is Large ribosomal subunit protein uL6 of Francisella tularensis subsp. mediasiatica (strain FSC147).